The primary structure comprises 461 residues: Smoothelin-like protein 2 (461 aa).

A coiled-coil region spans residues 55–88; the sequence is PLARTVADLQRDNQRLQAQLERLTRQVEALGLAS. Disordered regions lie at residues 87–193 and 227–248; these read ASGM…LRLP and LNPS…KNSS. The segment covering 94–107 has biased composition (pro residues); that stretch reads PGTPGTPSPPPAPG. Phosphothreonine is present on Thr96. Phosphoserine occurs at positions 101, 129, and 134. The segment covering 134–147 has biased composition (basic and acidic residues); that stretch reads SLDHDEASESEMRK. Phosphoserine is present on residues Ser256 and Ser269. Positions 260–307 are disordered; the sequence is AVTASKHSNSPPLVTPPQSPVSPQPPAITQVHRQGERRRELVRSQTLP. Residues 272–285 show a composition bias toward pro residues; sequence LVTPPQSPVSPQPP. Phosphothreonine is present on Thr274. Ser278 bears the Phosphoserine mark. Residues 292 to 301 show a composition bias toward basic and acidic residues; it reads RQGERRRELV. Ser344 carries the phosphoserine modification. In terms of domain architecture, Calponin-homology (CH) spans 351–458; the sequence is SSIKQILLEW…YVQSLYNHLR (108 aa).

This sequence belongs to the smoothelin family.

In Homo sapiens (Human), this protein is Smoothelin-like protein 2 (SMTNL2).